Reading from the N-terminus, the 150-residue chain is UPF0336 protein SAV_4901 (150 aa).

In terms of domain architecture, MaoC-like spans 8–126 (VGRSYPPTDP…GNDVVDVRGE (119 aa)).

It belongs to the UPF0336 family.

The protein is UPF0336 protein SAV_4901 of Streptomyces avermitilis (strain ATCC 31267 / DSM 46492 / JCM 5070 / NBRC 14893 / NCIMB 12804 / NRRL 8165 / MA-4680).